Here is a 195-residue protein sequence, read N- to C-terminus: Small ribosomal subunit protein eS7 (195 aa).

Phosphothreonine occurs at positions 146 and 151. Residues Ser-172 and Ser-173 each carry the phosphoserine modification.

This sequence belongs to the eukaryotic ribosomal protein eS7 family. In terms of assembly, component of the small ribosomal subunit (SSU). Mature yeast ribosomes consist of a small (40S) and a large (60S) subunit. The 40S small subunit contains 1 molecule of ribosomal RNA (18S rRNA) and at least 33 different proteins. The large 60S subunit contains 3 rRNA molecules (25S, 5.8S and 5S rRNA) and at least 46 different proteins. Interacts with snoRNA U3. uS11 interacts with MPP10. Component of the ribosomal small subunit (SSU) processome composed of at least 40 protein subunits and snoRNA U3.

It localises to the cytoplasm. It is found in the nucleus. The protein resides in the nucleolus. Component of the ribosome, a large ribonucleoprotein complex responsible for the synthesis of proteins in the cell. The small ribosomal subunit (SSU) binds messenger RNAs (mRNAs) and translates the encoded message by selecting cognate aminoacyl-transfer RNA (tRNA) molecules. The large subunit (LSU) contains the ribosomal catalytic site termed the peptidyl transferase center (PTC), which catalyzes the formation of peptide bonds, thereby polymerizing the amino acids delivered by tRNAs into a polypeptide chain. The nascent polypeptides leave the ribosome through a tunnel in the LSU and interact with protein factors that function in enzymatic processing, targeting, and the membrane insertion of nascent chains at the exit of the ribosomal tunnel. eS7 is involved in nucleolar processing of pre-18S ribosomal RNA and ribosome assembly. The sequence is that of Small ribosomal subunit protein eS7 (rps7) from Schizosaccharomyces pombe (strain 972 / ATCC 24843) (Fission yeast).